A 319-amino-acid polypeptide reads, in one-letter code: Glutathione synthetase (319 aa).

In terms of domain architecture, ATP-grasp spans 129–314; that stretch reads KLAILNFSRF…VAAMFADAVA (186 aa). 155–211 serves as a coordination point for ATP; it reads LKEHGDIIIKPLDGMGGMGIFRLTEKDPNIGSILETLMQLDSRTIMAQRYIPEIVHG. Glu285 and Asn287 together coordinate Mg(2+).

The protein belongs to the prokaryotic GSH synthase family. The cofactor is Mg(2+). Mn(2+) serves as cofactor.

The catalysed reaction is gamma-L-glutamyl-L-cysteine + glycine + ATP = glutathione + ADP + phosphate + H(+). It participates in sulfur metabolism; glutathione biosynthesis; glutathione from L-cysteine and L-glutamate: step 2/2. This Neisseria meningitidis serogroup B (strain ATCC BAA-335 / MC58) protein is Glutathione synthetase.